We begin with the raw amino-acid sequence, 143 residues long: Hemoglobin subunit alpha-A (143 aa).

Residues 2-143 (SLSGKDKSVV…LALALAERYR (142 aa)) enclose the Globin domain. Histidine 60 contacts O2. Heme b is bound at residue histidine 89.

This sequence belongs to the globin family. In terms of assembly, heterotetramer of two alpha chains and two beta chains. Red blood cells.

Functionally, involved in oxygen transport from gills to the various peripheral tissues. This is Hemoglobin subunit alpha-A (hbaa) from Seriola quinqueradiata (Five-ray yellowtail).